The primary structure comprises 715 residues: Fatty acid oxidation complex subunit alpha (715 aa).

Residues 1 to 190 (MIYEGKAITV…KVGAVDAVVA (190 aa)) form an enoyl-CoA hydratase/isomerase region. Aspartate 297 is a substrate binding site. The interval 312–715 (RDVKQAAVLG…MAKNGQSFFG (404 aa)) is 3-hydroxyacyl-CoA dehydrogenase. Residues methionine 325, aspartate 344, 401–403 (VVE), lysine 408, and serine 430 each bind NAD(+). Histidine 451 (for 3-hydroxyacyl-CoA dehydrogenase activity) is an active-site residue. Residue asparagine 454 participates in NAD(+) binding. 2 residues coordinate substrate: asparagine 501 and tyrosine 660.

The protein in the N-terminal section; belongs to the enoyl-CoA hydratase/isomerase family. In the C-terminal section; belongs to the 3-hydroxyacyl-CoA dehydrogenase family. As to quaternary structure, heterotetramer of two alpha chains (FadB) and two beta chains (FadA).

The catalysed reaction is a (3S)-3-hydroxyacyl-CoA + NAD(+) = a 3-oxoacyl-CoA + NADH + H(+). The enzyme catalyses a (3S)-3-hydroxyacyl-CoA = a (2E)-enoyl-CoA + H2O. It carries out the reaction a 4-saturated-(3S)-3-hydroxyacyl-CoA = a (3E)-enoyl-CoA + H2O. It catalyses the reaction (3S)-3-hydroxybutanoyl-CoA = (3R)-3-hydroxybutanoyl-CoA. The catalysed reaction is a (3Z)-enoyl-CoA = a 4-saturated (2E)-enoyl-CoA. The enzyme catalyses a (3E)-enoyl-CoA = a 4-saturated (2E)-enoyl-CoA. Its pathway is lipid metabolism; fatty acid beta-oxidation. In terms of biological role, involved in the aerobic and anaerobic degradation of long-chain fatty acids via beta-oxidation cycle. Catalyzes the formation of 3-oxoacyl-CoA from enoyl-CoA via L-3-hydroxyacyl-CoA. It can also use D-3-hydroxyacyl-CoA and cis-3-enoyl-CoA as substrate. This Pseudomonas fluorescens (strain SBW25) protein is Fatty acid oxidation complex subunit alpha.